A 213-amino-acid polypeptide reads, in one-letter code: MGISLWLCPYGHSPEYETFKTLIESLQTLFPNSPVFEPHVTVCSGLSCENMEEVHKVLEMAHHAINAVKSKVDSENALVEFDGFNIGKKYFEKCRLECKPNPMLYSLAKLIRSMFVGELNIDTWLFEEFHPHLSLAYSDIYPMDQAMIRLIRQRIEDLFDVTTEEIESHSRDQDAYKLQHTLKGWSFPLTFKVVRCEGPVEEWEVLSEVTVHG.

His-39 functions as the Proton donor/acceptor in the catalytic mechanism. Residue Thr-41 participates in substrate binding. The Proton donor/acceptor role is filled by His-132. Positions 134 and 137 each coordinate substrate.

This sequence belongs to the 2H phosphoesterase superfamily. CPD1 family.

The protein resides in the golgi apparatus. The enzyme catalyses a nucleoside 2',3'-cyclic phosphate + H2O = a nucleoside 2'-phosphate + H(+). Its function is as follows. Involved in the metabolism of ADP-ribose 1',2'-cyclic phosphate which is produced as a consequence of tRNA splicing. This Kluyveromyces lactis (strain ATCC 8585 / CBS 2359 / DSM 70799 / NBRC 1267 / NRRL Y-1140 / WM37) (Yeast) protein is 2',3'-cyclic-nucleotide 3'-phosphodiesterase (CPD1).